Reading from the N-terminus, the 261-residue chain is Pimeloyl-[acyl-carrier protein] methyl ester esterase (261 aa).

An AB hydrolase-1 domain is found at 15–243; that stretch reads HLVLLHGWGL…AAHAPFISHP (229 aa). Substrate contacts are provided by residues W22, 83 to 84, and 144 to 148; these read SL and FLALQ. S83 serves as the catalytic Nucleophile. Catalysis depends on residues D208 and H236. H236 is a substrate binding site.

This sequence belongs to the AB hydrolase superfamily. Carboxylesterase BioH family. Monomer.

The protein resides in the cytoplasm. The catalysed reaction is 6-carboxyhexanoyl-[ACP] methyl ester + H2O = 6-carboxyhexanoyl-[ACP] + methanol + H(+). The protein operates within cofactor biosynthesis; biotin biosynthesis. Functionally, the physiological role of BioH is to remove the methyl group introduced by BioC when the pimeloyl moiety is complete. It allows to synthesize pimeloyl-ACP via the fatty acid synthetic pathway through the hydrolysis of the ester bonds of pimeloyl-ACP esters. In Proteus mirabilis (strain HI4320), this protein is Pimeloyl-[acyl-carrier protein] methyl ester esterase.